The chain runs to 506 residues: Zinc finger protein MAGPIE (506 aa).

Residues 1-53 form a disordered region; it reads MTTEDQTISSSGGYVQSSSTTDHVDHHHHDQHESLNPPLVKKKRNLPGNPDPE. The span at 9–21 shows a compositional bias: low complexity; that stretch reads SSSGGYVQSSSTT. Basic and acidic residues predominate over residues 22-33; the sequence is DHVDHHHHDQHE. Residue Ser-60 is modified to Phosphoserine. 2 consecutive C2H2-type zinc fingers follow at residues 70-92 and 111-141; these read FLCEICGKGFQRDQNLQLHRRGH and YVCPEKSCVHHHPTRALGDLTGIKKHFCRKH. Positions 133-140 match the Nuclear localization signal motif; the sequence is IKKHFCRK. The segment at 146 to 169 adopts a C2H2-type 2; degenerate zinc-finger fold; the sequence is WKCEKCAKRYAVQSDWKAHSKTCG. Zn(2+) contacts are provided by Cys-148, Cys-151, His-164, Cys-168, Cys-175, Cys-177, His-190, and Cys-194. The CCHC-type 2; atypical zinc finger occupies 173–196; sequence YRCDCGTIFSRRDSFITHRAFCDA. Residues 183–195 are SHR-binding; the sequence is RRDSFITHRAFCD.

As to quaternary structure, interacts with SHR, SCR and JKD, but not with itself. Interacts with SIEL. Binds to RGA and SCL3 competitively in the nucleus. As to expression, expressed in the ground tissue and stele cells of embryos and 2-days post-germination roots but not in the quiescent center. Detected only in cells that perform asymmetric cell divisions. In roots, present in cortex, endodermis, and pericycle layer.

The protein localises to the nucleus. Its function is as follows. Transcription factor that regulates tissue boundaries and asymmetric cell division. Contributes to the sequestration of 'SHORT-ROOT' to the nucleus. Interacts with the SCR and MGP promoters. Does not show transcription activity by itself, but regulates the transcription of downstream genes through interaction with other transcription factors. Binds DNA via its zinc fingers. Recognizes and binds to SCL3 promoter sequence 5'-AGACAA-3' to promote its expression when in complex with RGA. Positively involved in gibberellic acid (GA) signaling. This Arabidopsis thaliana (Mouse-ear cress) protein is Zinc finger protein MAGPIE.